Here is an 89-residue protein sequence, read N- to C-terminus: Small ribosomal subunit protein uS15 (89 aa).

It belongs to the universal ribosomal protein uS15 family. In terms of assembly, part of the 30S ribosomal subunit. Forms a bridge to the 50S subunit in the 70S ribosome, contacting the 23S rRNA.

Functionally, one of the primary rRNA binding proteins, it binds directly to 16S rRNA where it helps nucleate assembly of the platform of the 30S subunit by binding and bridging several RNA helices of the 16S rRNA. Its function is as follows. Forms an intersubunit bridge (bridge B4) with the 23S rRNA of the 50S subunit in the ribosome. The chain is Small ribosomal subunit protein uS15 from Laribacter hongkongensis (strain HLHK9).